A 274-amino-acid chain; its full sequence is UPF0173 metal-dependent hydrolase AnaeK_1127 (274 aa).

The protein belongs to the UPF0173 family.

This Anaeromyxobacter sp. (strain K) protein is UPF0173 metal-dependent hydrolase AnaeK_1127.